Consider the following 247-residue polypeptide: Sulfate transporter CysZ (247 aa).

A run of 5 helical transmembrane segments spans residues phenylalanine 29–phenylalanine 49, phenylalanine 66–phenylalanine 86, leucine 141–leucine 160, valine 164–phenylalanine 186, and valine 212–isoleucine 232.

It belongs to the CysZ family.

It localises to the cell inner membrane. Its function is as follows. High affinity, high specificity proton-dependent sulfate transporter, which mediates sulfate uptake. Provides the sulfur source for the cysteine synthesis pathway. This is Sulfate transporter CysZ from Vibrio parahaemolyticus serotype O3:K6 (strain RIMD 2210633).